We begin with the raw amino-acid sequence, 357 residues long: Arginine kinase Cal b 2.0101 (357 aa).

A Phosphagen kinase N-terminal domain is found at 9-91; that stretch reads KLEEGFKKLE…FDPIIEDYHK (83 aa). L-arginine is bound at residue 64-68; sequence GVGVY. The 238-residue stretch at 119-356 folds into the Phosphagen kinase C-terminal domain; that stretch reads FVISTRVRCG…LELIKIEKEM (238 aa). ATP is bound by residues 122–126 and His185; that span reads STRVR. Cys201 and Cys271 are oxidised to a cystine. Glu225 is a binding site for L-arginine. Arg229 contacts ATP. An L-arginine-binding site is contributed by Cys271. ATP contacts are provided by residues 280–284 and 309–314; these read RASVH and RGTRGE. L-arginine is bound at residue Glu314.

Belongs to the ATP:guanido phosphotransferase family. In terms of tissue distribution, expressed in chela muscle (at protein level). Expressed in muscle.

It carries out the reaction L-arginine + ATP = N(omega)-phospho-L-arginine + ADP + H(+). Functionally, catalyzes the reversible transfer of high energy ATP gamma-phosphate group to L-arginine. This is Arginine kinase Cal b 2.0101 from Callinectes bellicosus (Warrior swimming crab).